A 285-amino-acid polypeptide reads, in one-letter code: Methylamine utilization protein MauF (285 aa).

7 helical membrane passes run 39-59 (LGGLVTAVSGGILGAALLSQT), 63-83 (GVAVPALLMGLSFVGGLLSTW), 120-140 (AVGALILGCVLGIAGGLLGFG), 144-164 (FGALAGLGAAGIIYGAHQLGF), 184-204 (FPVWFIGGLYGLSLGLNYLTY), 209-229 (ILYLVTAAAVLSSNIGAAILL), and 265-285 (ALLDGVLLVAGGAALLTFAAL).

The protein resides in the cell membrane. It participates in one-carbon metabolism; methylamine degradation. This chain is Methylamine utilization protein MauF (mauF), found in Methylorubrum extorquens (strain ATCC 14718 / DSM 1338 / JCM 2805 / NCIMB 9133 / AM1) (Methylobacterium extorquens).